We begin with the raw amino-acid sequence, 173 residues long: Dual-action ribosomal maturation protein DarP (173 aa).

Belongs to the DarP family.

The protein resides in the cytoplasm. In terms of biological role, member of a network of 50S ribosomal subunit biogenesis factors which assembles along the 30S-50S interface, preventing incorrect 23S rRNA structures from forming. Promotes peptidyl transferase center (PTC) maturation. The chain is Dual-action ribosomal maturation protein DarP from Pseudomonas fluorescens (strain ATCC BAA-477 / NRRL B-23932 / Pf-5).